Reading from the N-terminus, the 396-residue chain is Small ribosomal subunit protein mS27 (396 aa).

This sequence belongs to the mitochondrion-specific ribosomal protein mS27 family. As to quaternary structure, component of the mitochondrial small ribosomal subunit (mt-SSU). Mature N.crassa 74S mitochondrial ribosomes consist of a small (37S) and a large (54S) subunit. The 37S small subunit contains a 16S ribosomal RNA (16S mt-rRNA) and 32 different proteins. The 54S large subunit contains a 23S rRNA (23S mt-rRNA) and 42 different proteins.

The protein localises to the mitochondrion. In terms of biological role, component of the mitochondrial ribosome (mitoribosome), a dedicated translation machinery responsible for the synthesis of mitochondrial genome-encoded proteins, including at least some of the essential transmembrane subunits of the mitochondrial respiratory chain. The mitoribosomes are attached to the mitochondrial inner membrane and translation products are cotranslationally integrated into the membrane. In Neurospora crassa (strain ATCC 24698 / 74-OR23-1A / CBS 708.71 / DSM 1257 / FGSC 987), this protein is Small ribosomal subunit protein mS27 (mrp13).